The chain runs to 593 residues: Mitoguardin 2 (593 aa).

Transmembrane regions (helical) follow at residues Met11–Gly31 and Pro42–Ala62. 3 disordered regions span residues Pro98 to Ser134, Thr150 to Gly171, and Val197 to Gln229. Composition is skewed to low complexity over residues Ser106–Ser116 and Ser124–Ser134. Residue Ser132 is modified to Phosphoserine. The span at Ser205–Thr218 shows a compositional bias: polar residues. Thr206 is subject to Phosphothreonine. Residues Ser220, Ser224, and Ser228 each carry the phosphoserine modification. At Thr273 the chain carries Phosphothreonine. A phosphoserine mark is found at Ser276 and Ser295. An FFAT motif is present at residues Ser292 to Glu298.

The protein belongs to the mitoguardin family. In terms of assembly, homodimer and heterodimer; forms heterodimers with MIGA1. Interacts with PLD6/MitoPLD. Interacts (via phosphorylated FFAT motif) with MOSPD2. Post-translationally, phosphorylation at Ser-295 of the FFAT motif activates interaction with MOSPD2.

The protein resides in the mitochondrion outer membrane. Functionally, regulator of mitochondrial fusion. Acts by forming homo- and heterodimers at the mitochondrial outer membrane and facilitating the formation of PLD6/MitoPLD dimers. May act by regulating phospholipid metabolism via PLD6/MitoPLD. In Mus musculus (Mouse), this protein is Mitoguardin 2.